Here is a 350-residue protein sequence, read N- to C-terminus: Holliday junction branch migration complex subunit RuvB (350 aa).

The segment at 1–184 (MSKTPERLVT…FGIPIRLEFY (184 aa)) is large ATPase domain (RuvB-L). ATP contacts are provided by residues Leu23, Arg24, Gly65, Lys68, Thr69, Thr70, 131 to 133 (EDF), Arg174, Tyr184, and Arg221. Residue Thr69 coordinates Mg(2+). Residues 185–255 (TIEELERIVL…LADKALSLLD (71 aa)) form a small ATPAse domain (RuvB-S) region. The segment at 258-350 (PIGLDQMDRR…GLFPDQSEED (93 aa)) is head domain (RuvB-H). Positions 294, 313, and 318 each coordinate DNA.

This sequence belongs to the RuvB family. In terms of assembly, homohexamer. Forms an RuvA(8)-RuvB(12)-Holliday junction (HJ) complex. HJ DNA is sandwiched between 2 RuvA tetramers; dsDNA enters through RuvA and exits via RuvB. An RuvB hexamer assembles on each DNA strand where it exits the tetramer. Each RuvB hexamer is contacted by two RuvA subunits (via domain III) on 2 adjacent RuvB subunits; this complex drives branch migration. In the full resolvosome a probable DNA-RuvA(4)-RuvB(12)-RuvC(2) complex forms which resolves the HJ.

It is found in the cytoplasm. It carries out the reaction ATP + H2O = ADP + phosphate + H(+). Functionally, the RuvA-RuvB-RuvC complex processes Holliday junction (HJ) DNA during genetic recombination and DNA repair, while the RuvA-RuvB complex plays an important role in the rescue of blocked DNA replication forks via replication fork reversal (RFR). RuvA specifically binds to HJ cruciform DNA, conferring on it an open structure. The RuvB hexamer acts as an ATP-dependent pump, pulling dsDNA into and through the RuvAB complex. RuvB forms 2 homohexamers on either side of HJ DNA bound by 1 or 2 RuvA tetramers; 4 subunits per hexamer contact DNA at a time. Coordinated motions by a converter formed by DNA-disengaged RuvB subunits stimulates ATP hydrolysis and nucleotide exchange. Immobilization of the converter enables RuvB to convert the ATP-contained energy into a lever motion, pulling 2 nucleotides of DNA out of the RuvA tetramer per ATP hydrolyzed, thus driving DNA branch migration. The RuvB motors rotate together with the DNA substrate, which together with the progressing nucleotide cycle form the mechanistic basis for DNA recombination by continuous HJ branch migration. Branch migration allows RuvC to scan DNA until it finds its consensus sequence, where it cleaves and resolves cruciform DNA. This chain is Holliday junction branch migration complex subunit RuvB, found in Beijerinckia indica subsp. indica (strain ATCC 9039 / DSM 1715 / NCIMB 8712).